The primary structure comprises 223 residues: Thymidine kinase (223 aa).

ATP is bound by residues 19–26 and 96–99; these read GPMFAGKT and DEVQ. Glutamate 97 (proton acceptor) is an active-site residue. Zn(2+) is bound by residues cysteine 153, cysteine 156, cysteine 191, and histidine 194.

It belongs to the thymidine kinase family. Homotetramer.

It localises to the cytoplasm. The catalysed reaction is thymidine + ATP = dTMP + ADP + H(+). In Ureaplasma urealyticum serovar 10 (strain ATCC 33699 / Western), this protein is Thymidine kinase.